The chain runs to 459 residues: Methylenetetrahydrofolate--tRNA-(uracil-5-)-methyltransferase TrmFO (459 aa).

Position 11–16 (11–16 (GAGLAG)) interacts with FAD.

Belongs to the MnmG family. TrmFO subfamily. FAD is required as a cofactor.

It localises to the cytoplasm. It catalyses the reaction uridine(54) in tRNA + (6R)-5,10-methylene-5,6,7,8-tetrahydrofolate + NADH + H(+) = 5-methyluridine(54) in tRNA + (6S)-5,6,7,8-tetrahydrofolate + NAD(+). The catalysed reaction is uridine(54) in tRNA + (6R)-5,10-methylene-5,6,7,8-tetrahydrofolate + NADPH + H(+) = 5-methyluridine(54) in tRNA + (6S)-5,6,7,8-tetrahydrofolate + NADP(+). Its function is as follows. Catalyzes the folate-dependent formation of 5-methyl-uridine at position 54 (M-5-U54) in all tRNAs. This chain is Methylenetetrahydrofolate--tRNA-(uracil-5-)-methyltransferase TrmFO, found in Synechococcus sp. (strain CC9311).